Here is a 334-residue protein sequence, read N- to C-terminus: Nucleoid-associated protein plu2870 (334 aa).

This sequence belongs to the YejK family.

Its subcellular location is the cytoplasm. It is found in the nucleoid. The sequence is that of Nucleoid-associated protein plu2870 from Photorhabdus laumondii subsp. laumondii (strain DSM 15139 / CIP 105565 / TT01) (Photorhabdus luminescens subsp. laumondii).